The sequence spans 653 residues: PAN2-PAN3 deadenylation complex subunit PAN3 (653 aa).

Disordered regions lie at residues 1 to 21 and 45 to 128; these read MASD…ENAK and HDPN…AAPD. The C3H1-type zinc finger occupies 19–48; the sequence is NAKDTLCRNVTIYGRCRYEDKGCVYNHDPN. Residues 68–95 are compositionally biased toward low complexity; sequence SFTPSLLSSNGSSPTSSSATLKKTTTIS. The span at 108–119 shows a compositional bias: polar residues; sequence GISSRSNASTPS. The pseudokinase domain stretch occupies residues 256 to 516; the sequence is QTLPNTQLPA…TIDIFITGIS (261 aa). ATP-binding positions include arginine 308, 357–364, and 416–417; these read DYHPLSKT and SK. Positions 517–555 form a coiled coil; it reads SQLMSTFDSALHMDDQLTSDLSRELENGRLVRLMTKLNF. A knob domain region spans residues 556-653; sequence INERPEYEHD…ALLKPTRRVH (98 aa).

This sequence belongs to the protein kinase superfamily. PAN3 family. In terms of assembly, homodimer. Forms a heterotrimer with a catalytic subunit pan2 to form the poly(A)-nuclease (PAN) deadenylation complex. Interacts (via PAM-2 motif) with poly(A)-binding protein pab1 (via PABC domain), conferring substrate specificity of the enzyme complex.

The protein resides in the cytoplasm. Its function is as follows. Regulatory subunit of the poly(A)-nuclease (PAN) deadenylation complex, one of two cytoplasmic mRNA deadenylases involved in mRNA turnover. PAN specifically shortens poly(A) tails of RNA and the activity is stimulated by poly(A)-binding protein pab1. PAN deadenylation is followed by rapid degradation of the shortened mRNA tails by the CCR4-NOT complex. Deadenylated mRNAs are then degraded by two alternative mechanisms, namely exosome-mediated 3'-5' exonucleolytic degradation, or deadenylation-dependent mRNA decaping and subsequent 5'-3' exonucleolytic degradation by xrn1. May also be involved in post-transcriptional maturation of mRNA poly(A) tails. pan3 acts as a positive regulator for PAN activity, recruiting the catalytic subunit pan2 to mRNA via its interaction with RNA and with pab1. The protein is PAN2-PAN3 deadenylation complex subunit PAN3 of Aspergillus terreus (strain NIH 2624 / FGSC A1156).